Here is a 662-residue protein sequence, read N- to C-terminus: Polyunsaturated fatty acid (12S)/(13S)-lipoxygenase, epidermal-type (662 aa).

Residues 2 to 114 form the PLAT domain; sequence VKYKILVATG…TICLTEGTAL (113 aa). The 548-residue stretch at 115–662 folds into the Lipoxygenase domain; it reads KVTDDTQNLF…PSLVENSVTI (548 aa). Residues His-360, His-365, His-540, and Ile-662 each coordinate Fe cation.

This sequence belongs to the lipoxygenase family. Fe cation serves as cofactor. In terms of tissue distribution, expressed in epidermis.

The protein localises to the cytoplasm. It carries out the reaction (5Z,8Z,11Z,14Z)-eicosatetraenoate + O2 = (12S)-hydroperoxy-(5Z,8Z,10E,14Z)-eicosatetraenoate. The enzyme catalyses 1-O-methyl-(9Z,12Z)-octadecadienoate + O2 = 1-O-methyl-(13S)-hydroperoxy-(9Z,11E)-octadecadienoate. It catalyses the reaction (8Z,11Z,14Z)-eicosatrienoate + O2 = (12S)-hydroperoxy-(8Z,10E,14Z)-eicosatrienoate. The catalysed reaction is (5Z,8Z,11Z)-eicosatrienoate + O2 = (12S)-hydroperoxy-(5Z,8Z,10E)-eicosatrienoate. It carries out the reaction 1-O-methyl-(5Z,8Z,11Z,14Z)-eicosatetraenoate + O2 = 1-O-methyl-(12S)-hydroperoxy-(5Z,8Z,10E,14Z)-eicosatetraenoate. The enzyme catalyses (9Z,12Z)-octadecadienoate + O2 = (13S)-hydroperoxy-(9Z,11E)-octadecadienoate. It catalyses the reaction (4Z,7Z,10Z,13Z,16Z,19Z)-docosahexaenoate + O2 = (14S)-hydroperoxy-(4Z,7Z,10Z,12E,16Z,19Z)-docosahexaenoate. It functions in the pathway lipid metabolism; hydroperoxy eicosatetraenoic acid biosynthesis. Arachidonate 12-lipoxygenase activity is decreased when the pH decreases from 7.4 to 6.0. Catalyzes the regio and stereo-specific incorporation of a single molecule of dioxygen into free and esterified polyunsaturated fatty acids generating lipid hydroperoxides that can be further reduced to the corresponding hydroxy species. Shows increasing catalytic activity within the series arachidonic acid &lt; 5,8,11-eicosatrienoic acid &lt; linoleic acid &lt; 8,11,14-eicosatrienoic acid. This Mus musculus (Mouse) protein is Polyunsaturated fatty acid (12S)/(13S)-lipoxygenase, epidermal-type.